A 152-amino-acid polypeptide reads, in one-letter code: uncharacterized protein (152 aa).

4 helical membrane passes run glutamate 2–leucine 22, phenylalanine 26–glutamate 46, valine 92–leucine 112, and tyrosine 128–lysine 148.

Its subcellular location is the membrane. This is an uncharacterized protein from Acanthamoeba polyphaga mimivirus (APMV).